Here is a 235-residue protein sequence, read N- to C-terminus: MEFHPPLQSATLIRRYKRFLADVITPEGETLTIHCANTGAMTGCATPGDTVWYSTSDNPKRKYPNSWELTETPAGHWICVNTLRANDLVAEAIAQNAIPEFSEYKKISREVKYGEENSRIDLLLQAEQQVNCYIEVKSVTLLQENCGYFPDAVTTRGQKHLRELQHIAEQGQRAVLFFAVLHSGINQVAAAAHIDHNYSSLLEQAQNSGVEVICYQANMTGKGMVLGDKLTFLLK.

Belongs to the SfsA family.

In Photorhabdus laumondii subsp. laumondii (strain DSM 15139 / CIP 105565 / TT01) (Photorhabdus luminescens subsp. laumondii), this protein is Sugar fermentation stimulation protein homolog.